A 35-amino-acid chain; its full sequence is Protein YbgU (35 aa).

The polypeptide is Protein YbgU (Escherichia coli (strain K12)).